The sequence spans 498 residues: Minor fimbrium subunit Mfa1 (498 aa).

Residues 1 to 19 form the signal peptide; that stretch reads MKLNKMFLVGALLSLGFAS. A lipid anchor (N-palmitoyl cysteine) is attached at cysteine 20. Residue cysteine 20 is the site of S-diacylglycerol cysteine attachment. Positions 20-50 are excised as a propeptide; the sequence is CSKEGNGPAPDSSSTADTHMSVSMSLPQHNR. Residues 436–476 form a disordered region; that stretch reads SGNPFVPTDPDPNNPDTPDNPDTPDPEDPDTPNPEEPLPVQ.

Belongs to the bacteroidetes fimbrillin superfamily. FimA/Mfa1 family. In terms of assembly, structural component of the fimbrial stalk. Minor fimbriae are composed of a structural subunit, such as the 53 kDa fimbrillin, and the accessory subunits Mfa3, Mfa4 and Mfa5. Fimbrium assembly occurs by linear, head-to-tail oligomerization of fimbrial subunits. This is mediated via insertion of a C-terminal beta-strand from one subunit into a groove in the N-terminal domain of the following subunit.

It is found in the fimbrium. The protein resides in the cell outer membrane. Functionally, structural subunit of the minor fimbriae. These filamentous pili are attached to the cell surface; they mediate biofilm formation, adhesion onto host cells and onto other bacteria that are part of the oral microbiome. They play an important role in invasion of periodontal tissues and are recognized as major virulence factors. Mfa1 orthologs from different strains have highly divergent sequences, and this correlates with pathogenicity. The chain is Minor fimbrium subunit Mfa1 from Porphyromonas gingivalis (Bacteroides gingivalis).